A 381-amino-acid polypeptide reads, in one-letter code: Alcohol dehydrogenase class-3 (381 aa).

Cys49 provides a ligand contact to Zn(2+). His50 provides a ligand contact to NAD(+). Positions 51 and 71 each coordinate an alcohol. Residues His71, Glu72, Cys101, Cys104, Cys107, Cys115, and Cys179 each contribute to the Zn(2+) site. Residues 204–209, Asp228, Lys233, Ile274, 297–299, 322–324, and Arg374 each bind NAD(+); these read GLGTVG, VGV, and TAF.

The protein belongs to the zinc-containing alcohol dehydrogenase family. Class-III subfamily. Homodimer. Requires Zn(2+) as cofactor. In terms of tissue distribution, expressed at low levels in the leaves.

It is found in the cytoplasm. The catalysed reaction is a primary alcohol + NAD(+) = an aldehyde + NADH + H(+). It carries out the reaction a secondary alcohol + NAD(+) = a ketone + NADH + H(+). The enzyme catalyses S-(hydroxymethyl)glutathione + NADP(+) = S-formylglutathione + NADPH + H(+). It catalyses the reaction S-(hydroxymethyl)glutathione + NAD(+) = S-formylglutathione + NADH + H(+). The chain is Alcohol dehydrogenase class-3 (FDH) from Zea mays (Maize).